Here is a 260-residue protein sequence, read N- to C-terminus: Pyridoxine 5'-phosphate synthase (260 aa).

Positions 10 and 21 each coordinate 3-amino-2-oxopropyl phosphate. His46 (proton acceptor) is an active-site residue. 1-deoxy-D-xylulose 5-phosphate-binding residues include Arg48 and His53. Residue Glu76 is the Proton acceptor of the active site. Position 113 (Thr113) interacts with 1-deoxy-D-xylulose 5-phosphate. His204 functions as the Proton donor in the catalytic mechanism. 3-amino-2-oxopropyl phosphate is bound by residues Asp205 and 227 to 228; that span reads GH.

Belongs to the PNP synthase family. As to quaternary structure, homooctamer; tetramer of dimers.

The protein localises to the cytoplasm. It carries out the reaction 3-amino-2-oxopropyl phosphate + 1-deoxy-D-xylulose 5-phosphate = pyridoxine 5'-phosphate + phosphate + 2 H2O + H(+). The protein operates within cofactor biosynthesis; pyridoxine 5'-phosphate biosynthesis; pyridoxine 5'-phosphate from D-erythrose 4-phosphate: step 5/5. In terms of biological role, catalyzes the complicated ring closure reaction between the two acyclic compounds 1-deoxy-D-xylulose-5-phosphate (DXP) and 3-amino-2-oxopropyl phosphate (1-amino-acetone-3-phosphate or AAP) to form pyridoxine 5'-phosphate (PNP) and inorganic phosphate. In Xylella fastidiosa (strain M12), this protein is Pyridoxine 5'-phosphate synthase.